The primary structure comprises 208 residues: Small ribosomal subunit protein uS4 (208 aa).

Positions 98 to 160 (CRLDNVVYRM…AKKQSRIQLA (63 aa)) constitute an S4 RNA-binding domain.

The protein belongs to the universal ribosomal protein uS4 family. In terms of assembly, part of the 30S ribosomal subunit. Contacts protein S5. The interaction surface between S4 and S5 is involved in control of translational fidelity.

In terms of biological role, one of the primary rRNA binding proteins, it binds directly to 16S rRNA where it nucleates assembly of the body of the 30S subunit. Functionally, with S5 and S12 plays an important role in translational accuracy. This Ruthia magnifica subsp. Calyptogena magnifica protein is Small ribosomal subunit protein uS4.